The primary structure comprises 196 residues: GTP cyclohydrolase-2 (196 aa).

Position 49-53 (49-53) interacts with GTP; it reads RVHSE. Zn(2+) is bound by residues Cys54, Cys65, and Cys67. GTP is bound by residues Gln70, 92 to 94, and Thr114; that span reads EGR. The Proton acceptor role is filled by Asp126. The active-site Nucleophile is Arg128. Thr149 and Lys154 together coordinate GTP.

Belongs to the GTP cyclohydrolase II family. As to quaternary structure, homodimer. Zn(2+) is required as a cofactor.

It carries out the reaction GTP + 4 H2O = 2,5-diamino-6-hydroxy-4-(5-phosphoribosylamino)-pyrimidine + formate + 2 phosphate + 3 H(+). It functions in the pathway cofactor biosynthesis; riboflavin biosynthesis; 5-amino-6-(D-ribitylamino)uracil from GTP: step 1/4. Catalyzes the conversion of GTP to 2,5-diamino-6-ribosylamino-4(3H)-pyrimidinone 5'-phosphate (DARP), formate and pyrophosphate. The sequence is that of GTP cyclohydrolase-2 from Shigella dysenteriae serotype 1 (strain Sd197).